Reading from the N-terminus, the 475-residue chain is Cytosolic non-specific dipeptidase (475 aa).

Lysine 9 bears the N6-acetyllysine mark. Serine 58 carries the phosphoserine modification. Mn(2+) is bound at residue histidine 99. The active site involves aspartate 101. Residue aspartate 132 coordinates Mn(2+). Catalysis depends on glutamate 166, which acts as the Proton acceptor. Residues 166–167 (EE), aspartate 195, histidine 228, threonine 330, arginine 343, serine 417, and histidine 445 each bind substrate. Glutamate 167 and aspartate 195 together coordinate Mn(2+). Mn(2+) is bound at residue histidine 445.

This sequence belongs to the peptidase M20A family. As to quaternary structure, homodimer. Mn(2+) serves as cofactor.

Its subcellular location is the cytoplasm. The enzyme catalyses Hydrolysis of dipeptides, preferentially hydrophobic dipeptides including prolyl amino acids.. It catalyses the reaction L-threonyl-L-threonine + H2O = 2 L-threonine. It carries out the reaction L-threonyl-L-serine + H2O = L-threonine + L-serine. The catalysed reaction is L-seryl-L-threonine + H2O = L-threonine + L-serine. The enzyme catalyses L-cysteinylglycine + H2O = L-cysteine + glycine. It catalyses the reaction L-alanyl-L-cysteine + H2O = L-cysteine + L-alanine. It carries out the reaction (S)-lactate + L-phenylalanine = N-[(S)-lactoyl]-L-phenylalanine + H2O. Functionally, catalyzes the peptide bond hydrolysis in dipeptides, displaying a non-redundant activity toward threonyl dipeptides. Mediates threonyl dipeptide catabolism in a tissue-specific way. Has high dipeptidase activity toward cysteinylglycine, an intermediate metabolite in glutathione metabolism. Metabolizes N-lactoyl-amino acids, both through hydrolysis to form lactic acid and amino acids, as well as through their formation by reverse proteolysis. Plays a role in the regulation of cell cycle arrest and apoptosis. The sequence is that of Cytosolic non-specific dipeptidase (CNDP2) from Bos taurus (Bovine).